Consider the following 474-residue polypeptide: Chromosomal replication initiator protein DnaA (474 aa).

A domain I, interacts with DnaA modulators region spans residues 1 to 73; it reads MTNIEQERWS…LSCWQAEMPE (73 aa). The interval 73–130 is domain II; that stretch reads EVHRIDLTVRTAMRCAAPAKEQAAPIEPRREDNRAAAHDLRVSATAPVSANHEALGGS. The interval 131–353 is domain III, AAA+ region; the sequence is PLDPRLTFSS…GAINRLLAHS (223 aa). Residues glycine 178, glycine 180, lysine 181, and threonine 182 each coordinate ATP. A domain IV, binds dsDNA region spans residues 354–474; sequence KLNAQPVTLE…VESLKRQLQE (121 aa).

It belongs to the DnaA family. As to quaternary structure, oligomerizes as a right-handed, spiral filament on DNA at oriC.

Its subcellular location is the cytoplasm. Functionally, plays an essential role in the initiation and regulation of chromosomal replication. ATP-DnaA binds to the origin of replication (oriC) to initiate formation of the DNA replication initiation complex once per cell cycle. Binds the DnaA box (a 9 base pair repeat at the origin) and separates the double-stranded (ds)DNA. Forms a right-handed helical filament on oriC DNA; dsDNA binds to the exterior of the filament while single-stranded (ss)DNA is stabiized in the filament's interior. The ATP-DnaA-oriC complex binds and stabilizes one strand of the AT-rich DNA unwinding element (DUE), permitting loading of DNA polymerase. After initiation quickly degrades to an ADP-DnaA complex that is not apt for DNA replication. Binds acidic phospholipids. The polypeptide is Chromosomal replication initiator protein DnaA (Rhodopseudomonas palustris (strain BisA53)).